Consider the following 3619-residue polypeptide: BEACH domain-containing protein lvsA (3619 aa).

Disordered regions lie at residues 1 to 117 (MFRR…NNNN), 648 to 709 (KIDD…EKEA), 1101 to 1129 (NNNN…NNDQ), 1367 to 1390 (SPNL…NSKK), 1636 to 1658 (IPTP…RKSI), 1893 to 1924 (SSIS…PTSG), and 1964 to 1999 (QQAA…NTPN). Residues 17–30 (PQVPHSPGHPPHQP) show a composition bias toward pro residues. Composition is skewed to low complexity over residues 31-59 (PQQQ…QQPQ), 68-87 (SVSS…SFSS), 97-117 (EESS…NNNN), 656-689 (NNNN…NEEN), 1101-1127 (NNNN…NNNN), 1375-1387 (NNNN…GGSN), 1640-1652 (SSSS…SSTS), and 1893-1923 (SSIS…TPTS). The stretch at 94–133 (SATEESSSINSNNNNNNNKNNNNNNNSNIIESNINVWTIM) is one WD 1 repeat. The span at 1974 to 1986 (MSIQSSPFQSKNL) shows a compositional bias: polar residues. Residues 2234–2258 (VKILEKLEADRVGLQKTVQSLYKSL) adopt a coiled-coil conformation. The stretch at 2294–2335 (LDSDFMNAFCYPLYKLVISDQHEHVDNSIKLWRLLLSLKTSS) is one WD 2 repeat. Disordered stretches follow at residues 2403 to 2457 (KKQH…ITKK) and 2596 to 2785 (NTSS…SEDE). Residues 2440 to 2452 (DRKDQSHQEEKSK) are compositionally biased toward basic and acidic residues. Over residues 2596–2662 (NTSSITNNNN…TTTPQQSSSQ (67 aa)) the composition is skewed to low complexity. Composition is skewed to polar residues over residues 2663–2687 (IKVS…SSSE) and 2694–2725 (KLQS…SEEN). 2 stretches are compositionally biased toward low complexity: residues 2726–2735 (SSLTSASTTL) and 2742–2764 (TQTT…TTTT). In terms of domain architecture, BEACH-type PH spans 2807–2932 (KDPRLNGIMY…TRDEVYHTLV (126 aa)). The segment at 2940 to 2971 (TIGGDAQGITGGQTGNDDNDDHHGGGGGRGVR) is disordered. The span at 2944–2953 (DAQGITGGQT) shows a compositional bias: gly residues. The span at 2959-2971 (DDHHGGGGGRGVR) shows a compositional bias: basic and acidic residues. The 299-residue stretch at 2972–3270 (DRFTSIWRKS…QLFDKPHPKR (299 aa)) folds into the BEACH domain. 5 WD repeats span residues 3347-3386 (HHDG…LAKR), 3389-3428 (GHTG…YVRS), 3431-3471 (AHEG…NYKT), 3474-3518 (IAND…LPDN), and 3563-3602 (SHST…QVKQ). The interval 3516–3539 (PDNNNSNNNNNNNNNNNNNATQIP) is disordered. Residues 3518–3534 (NNNSNNNNNNNNNNNNN) are compositionally biased toward low complexity.

Its subcellular location is the contractile vacuole membrane. Involved in myosin-independent cytokinesis and early steps of phagocytosis. Also involved in contractile vacuole-mediated osmoregulation. The sequence is that of BEACH domain-containing protein lvsA (lvsA) from Dictyostelium discoideum (Social amoeba).